Consider the following 432-residue polypeptide: Putative transferase At1g60990, chloroplastic (432 aa).

Residues 1 to 57 (MNLLQSCKDMAMMMRIDSVSHITNTALLPCLYNGTVLRRRSLSLRKCGFRERKFQLR) constitute a chloroplast transit peptide.

This sequence belongs to the GcvT family. In terms of tissue distribution, expressed in young leaves (at protein level).

It is found in the plastid. The protein localises to the chloroplast. Folate-dependent protein involved in Fe/S cluster biogenesis. Functionally complements an E.coli mutant defective in ygfZ. In Arabidopsis thaliana (Mouse-ear cress), this protein is Putative transferase At1g60990, chloroplastic.